The primary structure comprises 80 residues: Putative membrane protein insertion efficiency factor (80 aa).

Positions 61–80 are disordered; sequence KTGKDPVPDRFSLKRNQEGE. Residues 62–80 show a composition bias toward basic and acidic residues; sequence TGKDPVPDRFSLKRNQEGE.

The protein belongs to the UPF0161 family.

Its subcellular location is the cell membrane. Could be involved in insertion of integral membrane proteins into the membrane. This is Putative membrane protein insertion efficiency factor from Streptococcus pneumoniae (strain P1031).